The chain runs to 498 residues: uncharacterized protein (498 aa).

An N-terminal signal peptide occupies residues Met-1 to Ala-26. Topologically, residues Ala-27 to Ala-441 are extracellular. N-linked (GlcNAc...) asparagine glycosylation is found at Asn-44, Asn-150, Asn-354, and Asn-357. A disordered region spans residues Gly-351–Asn-439. The segment covering Ser-362–Gly-414 has biased composition (gly residues). Residues Ala-418 to Ser-436 show a composition bias toward basic and acidic residues. A helical transmembrane segment spans residues Leu-442 to Trp-462. At Lys-463–Gln-498 the chain is on the cytoplasmic side.

It is found in the membrane. This is an uncharacterized protein from Arabidopsis thaliana (Mouse-ear cress).